Consider the following 975-residue polypeptide: Protein spalten (975 aa).

Disordered stretches follow at residues 1 to 31 (MKKM…QLAQ) and 64 to 99 (NLAQ…SNNN). The segment covering 8–17 (NKKEKKEEQS) has biased composition (basic and acidic residues). Positions 21 to 70 (SSLAQQHQLAQQQYQLQQQQLQLQYQQHQQQLQLAQQQKQNEQNLAQLST) form a coiled coil. Residues 114 to 458 (FCGTIMILGH…DAEKRGFTTP (345 aa)) enclose the G-alpha domain. The segment at 117-130 (TIMILGHTESGKTT) is G1 motif. Residues 122 to 129 (GHTESGKT), 261 to 267 (ISAYDQK), 286 to 290 (GCSGK), and 373 to 376 (NTSD) contribute to the GTP site. The G2 motif stretch occupies residues 259 to 267 (DIISAYDQK). The segment at 282–291 (VDLFGCSGKQ) is G3 motif. A G4 motif region spans residues 369–376 (YLIFNTSD). The interval 427–432 (VNLLDK) is G5 motif. Disordered stretches follow at residues 455-520 (FTTP…GSST) and 541-700 (DNDS…VGSK). 3 stretches are compositionally biased toward low complexity: residues 460-478 (NQSN…SRNS), 500-515 (LKNV…NTTT), and 544-587 (SSYS…NNAT). The span at 595–688 (PPKEPKPVKP…DGAAESKKNG (94 aa)) shows a compositional bias: basic and acidic residues. A PPM-type phosphatase domain is found at 704-972 (ESGFGSLQGR…DNITVLVVIL (269 aa)). Mn(2+) is bound by residues Asp749, Gly750, Asp920, and Asp963.

The protein in the N-terminal section; belongs to the G-alpha family. In the C-terminal section; belongs to the PP2C family. In terms of assembly, g proteins are composed of 3 units; alpha, beta and gamma. The alpha chain contains the guanine nucleotide binding site. The cofactor is Mg(2+). It depends on Mn(2+) as a cofactor.

Its subcellular location is the cytoplasm. It is found in the cytosol. The protein localises to the cell membrane. The catalysed reaction is O-phospho-L-seryl-[protein] + H2O = L-seryl-[protein] + phosphate. It catalyses the reaction O-phospho-L-threonyl-[protein] + H2O = L-threonyl-[protein] + phosphate. With respect to regulation, inhibited by 50 mM NaF (sodium fluoride). Functionally, involved in cell-type differentiation and morphogenesis. Dephosphorylates casein; in vitro. May also be involved as modulators or transducers in various transmembrane signaling systems. This is Protein spalten (spnA) from Dictyostelium discoideum (Social amoeba).